Here is a 959-residue protein sequence, read N- to C-terminus: Glycine dehydrogenase (decarboxylating) (959 aa).

An N6-(pyridoxal phosphate)lysine modification is found at lysine 704.

It belongs to the GcvP family. As to quaternary structure, the glycine cleavage system is composed of four proteins: P, T, L and H. Pyridoxal 5'-phosphate is required as a cofactor.

The enzyme catalyses N(6)-[(R)-lipoyl]-L-lysyl-[glycine-cleavage complex H protein] + glycine + H(+) = N(6)-[(R)-S(8)-aminomethyldihydrolipoyl]-L-lysyl-[glycine-cleavage complex H protein] + CO2. Its function is as follows. The glycine cleavage system catalyzes the degradation of glycine. The P protein binds the alpha-amino group of glycine through its pyridoxal phosphate cofactor; CO(2) is released and the remaining methylamine moiety is then transferred to the lipoamide cofactor of the H protein. In Parasynechococcus marenigrum (strain WH8102), this protein is Glycine dehydrogenase (decarboxylating).